The sequence spans 62 residues: Small ribosomal subunit protein bS21C (62 aa).

The segment at glutamate 43–threonine 62 is disordered. Basic residues predominate over residues serine 45–threonine 62.

This sequence belongs to the bacterial ribosomal protein bS21 family.

This chain is Small ribosomal subunit protein bS21C, found in Trichormus variabilis (strain ATCC 29413 / PCC 7937) (Anabaena variabilis).